We begin with the raw amino-acid sequence, 223 residues long: RNA-free ribonuclease P (223 aa).

The protein belongs to the HARP family.

It carries out the reaction Endonucleolytic cleavage of RNA, removing 5'-extranucleotides from tRNA precursor.. Its function is as follows. RNA-free RNase P that catalyzes the removal of the 5'-leader sequence from pre-tRNA to produce the mature 5'-terminus. The protein is RNA-free ribonuclease P of Methanococcus vannielii (strain ATCC 35089 / DSM 1224 / JCM 13029 / OCM 148 / SB).